The primary structure comprises 336 residues: Holliday junction branch migration complex subunit RuvB (336 aa).

Positions 1–181 (MDRIVEIEKV…FGMDFRLQFY (181 aa)) are large ATPase domain (RuvB-L). Residues Leu-20, Arg-21, Gly-62, Lys-65, Thr-66, Thr-67, 128 to 130 (EDF), Arg-171, Tyr-181, and Arg-218 contribute to the ATP site. Thr-66 is a binding site for Mg(2+). The small ATPAse domain (RuvB-S) stretch occupies residues 182 to 252 (TSSELSRIVQ…RAKEGLNALG (71 aa)). The tract at residues 255–336 (SLGFDEMDIR…KIDIEKGLFE (82 aa)) is head domain (RuvB-H). 2 residues coordinate DNA: Arg-309 and Arg-314.

It belongs to the RuvB family. As to quaternary structure, homohexamer. Forms an RuvA(8)-RuvB(12)-Holliday junction (HJ) complex. HJ DNA is sandwiched between 2 RuvA tetramers; dsDNA enters through RuvA and exits via RuvB. An RuvB hexamer assembles on each DNA strand where it exits the tetramer. Each RuvB hexamer is contacted by two RuvA subunits (via domain III) on 2 adjacent RuvB subunits; this complex drives branch migration. In the full resolvosome a probable DNA-RuvA(4)-RuvB(12)-RuvC(2) complex forms which resolves the HJ.

The protein resides in the cytoplasm. It catalyses the reaction ATP + H2O = ADP + phosphate + H(+). Its function is as follows. The RuvA-RuvB-RuvC complex processes Holliday junction (HJ) DNA during genetic recombination and DNA repair, while the RuvA-RuvB complex plays an important role in the rescue of blocked DNA replication forks via replication fork reversal (RFR). RuvA specifically binds to HJ cruciform DNA, conferring on it an open structure. The RuvB hexamer acts as an ATP-dependent pump, pulling dsDNA into and through the RuvAB complex. RuvB forms 2 homohexamers on either side of HJ DNA bound by 1 or 2 RuvA tetramers; 4 subunits per hexamer contact DNA at a time. Coordinated motions by a converter formed by DNA-disengaged RuvB subunits stimulates ATP hydrolysis and nucleotide exchange. Immobilization of the converter enables RuvB to convert the ATP-contained energy into a lever motion, pulling 2 nucleotides of DNA out of the RuvA tetramer per ATP hydrolyzed, thus driving DNA branch migration. The RuvB motors rotate together with the DNA substrate, which together with the progressing nucleotide cycle form the mechanistic basis for DNA recombination by continuous HJ branch migration. Branch migration allows RuvC to scan DNA until it finds its consensus sequence, where it cleaves and resolves cruciform DNA. This Campylobacter concisus (strain 13826) protein is Holliday junction branch migration complex subunit RuvB.